The chain runs to 156 residues: Small ribosomal subunit protein uS7c (156 aa).

This sequence belongs to the universal ribosomal protein uS7 family. Part of the 30S ribosomal subunit.

It is found in the plastid. The protein resides in the chloroplast. Its function is as follows. One of the primary rRNA binding proteins, it binds directly to 16S rRNA where it nucleates assembly of the head domain of the 30S subunit. In Nephroselmis olivacea (Green alga), this protein is Small ribosomal subunit protein uS7c (rps7).